Consider the following 362-residue polypeptide: tRNA 2-selenouridine synthase (362 aa).

The 124-residue stretch at 14-137 folds into the Rhodanese domain; it reads LANETPIIDV…LRQATIEMTN (124 aa). The active-site S-selanylcysteine intermediate is the cysteine 97.

Belongs to the SelU family. Monomer.

It carries out the reaction 5-methylaminomethyl-2-thiouridine(34) in tRNA + selenophosphate + (2E)-geranyl diphosphate + H2O + H(+) = 5-methylaminomethyl-2-selenouridine(34) in tRNA + (2E)-thiogeraniol + phosphate + diphosphate. The catalysed reaction is 5-methylaminomethyl-2-thiouridine(34) in tRNA + (2E)-geranyl diphosphate = 5-methylaminomethyl-S-(2E)-geranyl-thiouridine(34) in tRNA + diphosphate. It catalyses the reaction 5-methylaminomethyl-S-(2E)-geranyl-thiouridine(34) in tRNA + selenophosphate + H(+) = 5-methylaminomethyl-2-(Se-phospho)selenouridine(34) in tRNA + (2E)-thiogeraniol. The enzyme catalyses 5-methylaminomethyl-2-(Se-phospho)selenouridine(34) in tRNA + H2O = 5-methylaminomethyl-2-selenouridine(34) in tRNA + phosphate. Functionally, involved in the post-transcriptional modification of the uridine at the wobble position (U34) of tRNA(Lys), tRNA(Glu) and tRNA(Gln). Catalyzes the conversion of 2-thiouridine (S2U-RNA) to 2-selenouridine (Se2U-RNA). Acts in a two-step process involving geranylation of 2-thiouridine (S2U) to S-geranyl-2-thiouridine (geS2U) and subsequent selenation of the latter derivative to 2-selenouridine (Se2U) in the tRNA chain. This is tRNA 2-selenouridine synthase from Proteus mirabilis (strain HI4320).